Reading from the N-terminus, the 92-residue chain is Beta-2-microglobulin (92 aa).

Residues 2 to 89 (PQIQVYSRHP…NHVSMDKPMT (88 aa)) form the Ig-like C1-type domain. A disulfide bridge connects residues Cys22 and Cys77.

It belongs to the beta-2-microglobulin family. In terms of assembly, heterodimer of an alpha chain and a beta chain. Beta-2-microglobulin is the beta-chain of major histocompatibility complex class I molecules.

It localises to the secreted. Functionally, component of the class I major histocompatibility complex (MHC). Involved in the presentation of peptide antigens to the immune system. This chain is Beta-2-microglobulin (B2m), found in Mus spretus (Western Mediterranean mouse).